The following is a 588-amino-acid chain: NADP-dependent malic enzyme 3 (588 aa).

N-acetylglycine is present on Gly2. The Proton donor role is filled by Tyr136. Arg189 contacts NADP(+). The active-site Proton acceptor is the Lys207. A divalent metal cation contacts are provided by Glu279, Asp280, and Asp303. NADP(+) contacts are provided by residues Asp303, 332-348 (LFLG…ELIA), and Asn444.

This sequence belongs to the malic enzymes family. In terms of assembly, homohexamers and homooctamers. Requires Mg(2+) as cofactor. It depends on Mn(2+) as a cofactor. Mostly expressed in flowers, and, to a lower extent, in stems. In leaves and stems, restricted to the trichomes and trichome basal cells. Also present in the stipules flanking the base of the inflorescence bract leaves and in the meristematic zone of developing lateral roots. In flowers, present in pollen and the abscission zone of developing siliques.

The protein localises to the cytoplasm. The catalysed reaction is (S)-malate + NADP(+) = pyruvate + CO2 + NADPH. The enzyme catalyses oxaloacetate + H(+) = pyruvate + CO2. Slightly activated by succinate and aspartate. Repressed by fumarate, malate, oxaloacetate and glucose. The protein is NADP-dependent malic enzyme 3 (NADP-ME3) of Arabidopsis thaliana (Mouse-ear cress).